Here is a 340-residue protein sequence, read N- to C-terminus: Flavonoid 7-O-methyltransferase 1 (340 aa).

Asp207 is an S-adenosyl-L-methionine binding site. His245 acts as the Proton acceptor in catalysis.

Belongs to the class I-like SAM-binding methyltransferase superfamily. Cation-independent O-methyltransferase family. Homodimer. As to expression, expressed in leaves.

It catalyses the reaction (2S)-naringenin + S-adenosyl-L-methionine = (2S)-sakuranetin + S-adenosyl-L-homocysteine + H(+). The catalysed reaction is scutellarein + S-adenosyl-L-methionine = scutellarein 7-methyl ether + S-adenosyl-L-homocysteine. It carries out the reaction apigenin + S-adenosyl-L-methionine = genkwanin + S-adenosyl-L-homocysteine + H(+). The enzyme catalyses luteolin + S-adenosyl-L-methionine = luteolin 7-methyl ether + S-adenosyl-L-homocysteine + H(+). It catalyses the reaction chrysoeriol + S-adenosyl-L-methionine = velutin + S-adenosyl-L-homocysteine. The catalysed reaction is diosmetin + S-adenosyl-L-methionine = luteolin 4',7-dimethyl ether + S-adenosyl-L-homocysteine. It carries out the reaction acacetin + S-adenosyl-L-methionine = apigenin 4',7-dimethyl ether + S-adenosyl-L-homocysteine. The enzyme catalyses scutellarein 4'-methyl ether + S-adenosyl-L-methionine = ladanein + S-adenosyl-L-homocysteine. The protein operates within flavonoid metabolism. Functionally, flavonoid 7-O-methyltransferase involved in the biosynthesis of polymethoxylated flavonoids natural products such as nevadensin and salvigenin, aroma compounds which contribute to the flavor of sweet basil, and exhibit pharmacological activities such as anti-allergic, anti-oxidant, antibacterial, anti-proliferative, and anti-inflammatory effects. Catalyzes S-adenosylmethionine-dependent regioselective 7-O-methylation of flavonoids; active on various hydroxylated flavonoid substrates, including apigenin (API) and luteolin (LUT), and, with a lower efficiency, scutellarein (SCU), naringenin (NAR), chrysoeriol (CHRYS), diosmetin (DIOS), acacetin (ACA) and scutellarein-7-methyl ether (SCU7Me). This is Flavonoid 7-O-methyltransferase 1 from Ocimum basilicum (Sweet basil).